Reading from the N-terminus, the 103-residue chain is N(4)-acetylcytidine amidohydrolase (103 aa).

One can recognise an ASCH domain in the interval 6-100 (ITFFQRFQDD…GESQFYVIEF (95 aa)). The Proton acceptor role is filled by K21. T24 acts as the Nucleophile in catalysis. E74 serves as the catalytic Proton donor.

It belongs to the N(4)-acetylcytidine amidohydrolase family.

It carries out the reaction N(4)-acetylcytidine + H2O = cytidine + acetate + H(+). The catalysed reaction is N(4)-acetyl-2'-deoxycytidine + H2O = 2'-deoxycytidine + acetate + H(+). It catalyses the reaction N(4)-acetylcytosine + H2O = cytosine + acetate + H(+). Catalyzes the hydrolysis of N(4)-acetylcytidine (ac4C). This Klebsiella pneumoniae subsp. pneumoniae (strain ATCC 700721 / MGH 78578) protein is N(4)-acetylcytidine amidohydrolase.